We begin with the raw amino-acid sequence, 152 residues long: MDRGELSRVFQMFDKNGDGKIAKNELKDFFKSVGIMVPENEINEMIAKMDVNGDGAMDIDEFGSLYQEMVEEKEEEEDMREAFRVFDQNGDGFITDEELRSVLASMGLKQGRTLEDCKKMISKVDVDGDGMVNFKEFKQMMRGGGFAALSSN.

EF-hand domains follow at residues 1-36, 37-72, 74-109, and 112-147; these read MDRG…VGIM, VPEN…MVEE, EEEE…MGLK, and RTLE…GGFA. D14, N16, D18, K20, E25, D50, N52, D54, E61, D87, N89, D91, E98, D125, D127, D129, M131, and E136 together coordinate Ca(2+).

The protein belongs to the calmodulin family.

Its function is as follows. Potential calcium sensor that is required for pollen tube attraction for ovule fertilization. In Arabidopsis thaliana (Mouse-ear cress), this protein is Calmodulin-like protein 2 (CML2).